Consider the following 211-residue polypeptide: Large ribosomal subunit protein uL3 (211 aa).

Positions 130–139 (QDATHGNSLS) are enriched in polar residues. The disordered stretch occupies residues 130 to 151 (QDATHGNSLSHRAPGSIGQNQT). Residue Q150 is modified to N5-methylglutamine.

The protein belongs to the universal ribosomal protein uL3 family. In terms of assembly, part of the 50S ribosomal subunit. Forms a cluster with proteins L14 and L19. In terms of processing, methylated by PrmB.

Its function is as follows. One of the primary rRNA binding proteins, it binds directly near the 3'-end of the 23S rRNA, where it nucleates assembly of the 50S subunit. The chain is Large ribosomal subunit protein uL3 from Alcanivorax borkumensis (strain ATCC 700651 / DSM 11573 / NCIMB 13689 / SK2).